Here is a 492-residue protein sequence, read N- to C-terminus: Octanoyltransferase (492 aa).

A unknown region spans residues 1-255 (MRCILLGSGT…GYDGLEAIID (255 aa)). The segment at 256–492 (EKGIRIKDFE…AVFRRNFGAL (237 aa)) is lipB domain. Positions 305–492 (RKPQNTLLFC…AVFRRNFGAL (188 aa)) constitute a BPL/LPL catalytic domain. Residues 350–357 (RGGDITYH), 423–425 (AIG), and 436–438 (GFA) contribute to the substrate site. The Acyl-thioester intermediate role is filled by Cys454.

It in the C-terminal section; belongs to the LipB family.

Its subcellular location is the cytoplasm. It carries out the reaction octanoyl-[ACP] + L-lysyl-[protein] = N(6)-octanoyl-L-lysyl-[protein] + holo-[ACP] + H(+). It participates in protein modification; protein lipoylation via endogenous pathway; protein N(6)-(lipoyl)lysine from octanoyl-[acyl-carrier-protein]: step 1/2. Its function is as follows. Catalyzes the transfer of endogenously produced octanoic acid from octanoyl-acyl-carrier-protein onto the lipoyl domains of lipoate-dependent enzymes. Lipoyl-ACP can also act as a substrate although octanoyl-ACP is likely to be the physiological substrate. This Porphyromonas gingivalis (strain ATCC BAA-308 / W83) protein is Octanoyltransferase.